The sequence spans 475 residues: Eukaryotic translation initiation factor 3 subunit L (475 aa).

Positions 257 to 451 constitute a PCI domain; sequence DAIRMFSHIL…DLDYAMQGDL (195 aa).

It belongs to the eIF-3 subunit L family. Component of the eukaryotic translation initiation factor 3 (eIF-3) complex.

The protein resides in the cytoplasm. In terms of biological role, component of the eukaryotic translation initiation factor 3 (eIF-3) complex, which is involved in protein synthesis of a specialized repertoire of mRNAs and, together with other initiation factors, stimulates binding of mRNA and methionyl-tRNAi to the 40S ribosome. The eIF-3 complex specifically targets and initiates translation of a subset of mRNAs involved in cell proliferation. In Sclerotinia sclerotiorum (strain ATCC 18683 / 1980 / Ss-1) (White mold), this protein is Eukaryotic translation initiation factor 3 subunit L.